The primary structure comprises 393 residues: ATP phosphoribosyltransferase regulatory subunit (393 aa).

Belongs to the class-II aminoacyl-tRNA synthetase family. HisZ subfamily. As to quaternary structure, heteromultimer composed of HisG and HisZ subunits.

It is found in the cytoplasm. It participates in amino-acid biosynthesis; L-histidine biosynthesis; L-histidine from 5-phospho-alpha-D-ribose 1-diphosphate: step 1/9. Functionally, required for the first step of histidine biosynthesis. May allow the feedback regulation of ATP phosphoribosyltransferase activity by histidine. The chain is ATP phosphoribosyltransferase regulatory subunit from Marinobacter nauticus (strain ATCC 700491 / DSM 11845 / VT8) (Marinobacter aquaeolei).